We begin with the raw amino-acid sequence, 1405 residues long: MKDLLKFLKQQSKTEEFNGIKIGLASPDLIRSWSFGEVKKPETINYRTFKPEREGLFCARIFGPVKDYECLCGKYKRLKHRGVICEKCGVEVTQTKVRRERMGHIELASPVAHIWFLKSLPSRIGLMLDMTLRDIERVLYFESFVVIEPGMTSLERGQMLTEETYLDALEEYGDEFEAKMGAEAVLELLRAIDLAKEIEQMREELPSINSETRRKKVTKRLKLMEAFYTSGNKPEWMILKVLPVLPPDLRPLVPLDGGRFATSDLNDLYRRVINRNNRLKRLLDLAAPDIIVRNEKRMLQESVDALLDNGRRGRAITGSNKRPLKSLADMIKGKQGRFRQNLLGKRVDYSGRSVITVGPTLRLHQCGLPKKMALELFKPFIYGKLEGRGLATTIKAAKKMVEREVAEVWDVLDEVIREHPVMLNRAPTLHRLGIQAFEPVLIEGKAIQLHPLVCAAYNADFDGDQMAVHVPLTLEAQLEARALMMSTNNILSPANGEPVITPSQDVVLGLYYTSRERINGRGEGMAFMSVAEVEKAYATGAAELHARVKVRITETIIGDTGERTEQRRIVDTTVGRALLSLILPAGLSFDLVNQNMGKKQISKLLNTCYRQLGLKDTVIFADQLMYTGFRFATISGASVGIDDMVIPDEKYTLVADAEAEVLEIQEQFQSGLVTAGERYNKVIDIWASANEKVSKAMMENLSTETVINRDGVEEKQASFNSIYMMADSGARGSAAQIRQLAGMRGLMAKPDGSIIETPITANFREGLNVLQYFISTHGARKGLADTALKTANSGYLTRRLVDVAQDLVVIEDDCGTHEGLTMKPLIEGGDVVEPLRERVLGRVVALDVFYPGTEDVLAPRNTLLDEAWCDKLEEYSIDEVIVRSVISCDTDFGVCAACYGRDLARGHIINHGEAIGVVAAQSIGEPGTQLTMRTFHIGGAASRASAENNVQVKNSGSLKLHNAKHVTNSDGKLVIVSRSSELAVIDELGREKERYKVPYGTVLEKLEEAAVEAGDVIANWDPHTHPIISEVAGSIKFVDMIDGVTMTRQTDELTGLSSIVILDVGQRGTAGKEMRPMIRLLGANGADLMIPGTEVPAQYFLPGSAIVNLEDNAQINVGDALARIPQESSKTRDITGGLPRVADLFEARKPKEPAILAEISGTISFGKETKGKRRLVITPADGGDHYEEMIPKWRNLNVFEGEKVERGEVIADGPEAAHDILRLRGIHNVANYIVNEVQDVYRLQGVKINDKHIEVIIRQMLRKCLITSAGDTDFLEGEQAEVSRVKIANRELIAQGKVPATFERELLGITKASLATESFISAASFQETTRVLTEAAVGGKSDQLRGLKENVIVGRLIPAGTGYAYHKTRNEARAKKNEPVVVNKITASEAEQNLADLLNLAGSQD.

Cysteine 70, cysteine 72, cysteine 85, and cysteine 88 together coordinate Zn(2+). Positions 460, 462, and 464 each coordinate Mg(2+). Cysteine 814, cysteine 888, cysteine 895, and cysteine 898 together coordinate Zn(2+).

Belongs to the RNA polymerase beta' chain family. The RNAP catalytic core consists of 2 alpha, 1 beta, 1 beta' and 1 omega subunit. When a sigma factor is associated with the core the holoenzyme is formed, which can initiate transcription. Mg(2+) serves as cofactor. The cofactor is Zn(2+).

The enzyme catalyses RNA(n) + a ribonucleoside 5'-triphosphate = RNA(n+1) + diphosphate. In terms of biological role, DNA-dependent RNA polymerase catalyzes the transcription of DNA into RNA using the four ribonucleoside triphosphates as substrates. The polypeptide is DNA-directed RNA polymerase subunit beta' (Shewanella baltica (strain OS223)).